The following is a 65-amino-acid chain: Small ribosomal subunit protein bS21 (65 aa).

It belongs to the bacterial ribosomal protein bS21 family.

In Chlorobium limicola (strain DSM 245 / NBRC 103803 / 6330), this protein is Small ribosomal subunit protein bS21.